The primary structure comprises 87 residues: Small ribosomal subunit protein uS17 (87 aa).

Belongs to the universal ribosomal protein uS17 family. Part of the 30S ribosomal subunit.

In terms of biological role, one of the primary rRNA binding proteins, it binds specifically to the 5'-end of 16S ribosomal RNA. In Exiguobacterium sibiricum (strain DSM 17290 / CCUG 55495 / CIP 109462 / JCM 13490 / 255-15), this protein is Small ribosomal subunit protein uS17.